A 142-amino-acid polypeptide reads, in one-letter code: Hemoglobin subunit alpha-I/II (142 aa).

Residues 2–142 form the Globin domain; it reads VLSAADKGNV…VSTVLTSKYR (141 aa). Ser4 is subject to Phosphoserine. N6-succinyllysine is present on residues Lys8 and Lys12. Lys17 bears the N6-acetyllysine; alternate mark. Lys17 bears the N6-succinyllysine; alternate mark. Tyr25 carries the phosphotyrosine modification. Ser36 is subject to Phosphoserine. Lys41 carries the N6-succinyllysine modification. Phosphoserine is present on Ser50. Residue His59 coordinates O2. His88 provides a ligand contact to heme b. Ser103 carries the post-translational modification Phosphoserine. The residue at position 109 (Thr109) is a Phosphothreonine. Residue Ser125 is modified to Phosphoserine. A phosphothreonine mark is found at Thr135 and Thr138. Ser139 carries the post-translational modification Phosphoserine.

It belongs to the globin family. Heterotetramer of two alpha chains and two beta chains. As to expression, red blood cells.

In terms of biological role, involved in oxygen transport from the lung to the various peripheral tissues. This Bison bonasus (European bison) protein is Hemoglobin subunit alpha-I/II.